The following is a 931-amino-acid chain: MLGGLARKLFGSANDRRVKGYRPRVQAINALEPELEALSDEALRARTEDFRRQLAEGKTLDDLLVPAFATVREGAKRALGMRPFDVQLIGGMVMHEAGIAEMKTGEGKTLVATLPVYLNALAGKGVHVVTVNDYLAKRDAEWMGRLYRFLGLTTGIIVHGLDDDERRVAYASDVTYATNNELGFDYLRDNMKYERGQMVQRPHFYAIVDEVDSILIDEARTPLIISGPLDDRSDFYNTIDTYIPRLGKEDYEVDEKQRSVSMTEAGMEKMEQMLSAAGVLKSASLYDIENVSVVHHVNQALRAHTLFQRDKDYIVRNDEVVIIDEFTGRMMPGRRYSEGLHQALEAKERVQVQPENQTLASITFQNYFRLYEKLSGMTGTANTEAAEFADIYKLEVVEIPTNVQISRIDDDDEVYRTAGEKYAAIIELIKECAERSQPVLVGTTSIEKSELLAELLKQAGFRQKDFSDPTAFNGRELLINDRSGKSFAVLNARYHEQEAYIVSQAGVPGAITIATNMAGRGTDIKLGGSADMRIEIELKDLPEGAERAAAEAKIRAEVEELKQKALEAGGLYVLGTERHESRRIDNQLRGRSGRQGDPGHSKFFLSLDDDLMRIFGSDRLDGMLQRLGLKEGEAIIHPWINKALEKAQQKVEARNYDMRKNVLKYDDVLNDQRKVVFEQRVELMNDEDVAETVEDMRHALITETVAKFIPENAYPEQWDVDGLDTALKEMLALDLPVKDWAKEEGIAGPEVTERIIRRADELMAAKTAQYGPDIMRYVEKSILLQTLDHLWREHIGMLDHLRQVVGLRGYAQRDPLNEYKSEAFNLFSALLNRLREVVTAQLMRVEIVTQQPPPEELPPMEAHHADPFTGEDELAFAGAALGSRPQPLLSGDLAVAERDPNDPESWGKVGRNEACPCGSGKKYKHCHGRFA.

Residues glutamine 87, 105–109 (GEGKT), and aspartate 523 contribute to the ATP site. Cysteine 915, cysteine 917, cysteine 926, and histidine 927 together coordinate Zn(2+).

This sequence belongs to the SecA family. Monomer and homodimer. Part of the essential Sec protein translocation apparatus which comprises SecA, SecYEG and auxiliary proteins SecDF-YajC and YidC. Requires Zn(2+) as cofactor.

It is found in the cell inner membrane. The protein localises to the cytoplasm. It catalyses the reaction ATP + H2O + cellular proteinSide 1 = ADP + phosphate + cellular proteinSide 2.. Its function is as follows. Part of the Sec protein translocase complex. Interacts with the SecYEG preprotein conducting channel. Has a central role in coupling the hydrolysis of ATP to the transfer of proteins into and across the cell membrane, serving both as a receptor for the preprotein-SecB complex and as an ATP-driven molecular motor driving the stepwise translocation of polypeptide chains across the membrane. The protein is Protein translocase subunit SecA of Xanthobacter autotrophicus (strain ATCC BAA-1158 / Py2).